A 560-amino-acid chain; its full sequence is Nucleoprotein (560 aa).

The segment at 53 to 236 (MRKDKRTDTD…ITQEQSQINV (184 aa)) is binding site for the cap structure m7GTP. Residues 333–353 (LTDTGSPNHPPVRNGGSPRLS) form a disordered region. 2 residues coordinate Mn(2+): D379 and E381. Positions 389, 496, 499, and 520 each coordinate Zn(2+). Position 524 (D524) interacts with Mn(2+).

Belongs to the arenaviridae nucleocapsid protein family. In terms of assembly, homomultimerizes to form the nucleocapsid. Binds to viral genomic RNA. Interacts with glycoprotein G2. Interacts with protein Z; this interaction probably directs the encapsidated genome to budding sites. Interacts with protein L; this interaction does not interfere with Z-L interaction. Interacts with host IKBKE (via Protein kinase domain); the interaction inhibits IKBKE kinase activity.

It localises to the virion. The protein resides in the host cytoplasm. Its function is as follows. Encapsidates the genome, protecting it from nucleases. The encapsidated genomic RNA is termed the nucleocapsid (NC). Serves as template for viral transcription and replication. The increased presence of protein N in host cell does not seem to trigger the switch from transcription to replication as observed in other negative strain RNA viruses. Through the interaction with host IKBKE, strongly inhibits the phosphorylation and nuclear translocation of host IRF3, a protein involved in interferon activation pathway, leading to the inhibition of interferon-beta and IRF3-dependent promoters activation. Also encodes a functional 3'-5' exoribonuclease that degrades preferentially dsRNA substrates and thereby participates in the suppression of interferon induction. This is Nucleoprotein from Pirital mammarenavirus (isolate Rat/Venezuela/VAV-488/1995) (PIRV).